A 133-amino-acid polypeptide reads, in one-letter code: Small ribosomal subunit protein uS8 (133 aa).

Belongs to the universal ribosomal protein uS8 family. As to quaternary structure, part of the 30S ribosomal subunit. Contacts proteins S5 and S12.

Functionally, one of the primary rRNA binding proteins, it binds directly to 16S rRNA central domain where it helps coordinate assembly of the platform of the 30S subunit. The sequence is that of Small ribosomal subunit protein uS8 from Chloroflexus aggregans (strain MD-66 / DSM 9485).